The sequence spans 268 residues: ClpXP adapter protein SpxH (268 aa).

The protein belongs to the SpxH family. As to quaternary structure, interacts with Spx.

It is found in the cytoplasm. Adapter protein required for efficient degradation of Spx by ClpXP under non-stress conditions. Interaction with Spx stabilizes Spx and exposes the C-terminus of Spx for recognition and proteolysis by ClpXP. This chain is ClpXP adapter protein SpxH, found in Staphylococcus aureus (strain Mu3 / ATCC 700698).